We begin with the raw amino-acid sequence, 178 residues long: Large ribosomal subunit protein uL5 (178 aa).

It belongs to the universal ribosomal protein uL5 family. As to quaternary structure, part of the 50S ribosomal subunit; part of the 5S rRNA/L5/L18/L25 subcomplex. Contacts the 5S rRNA and the P site tRNA. Forms a bridge to the 30S subunit in the 70S ribosome.

This is one of the proteins that bind and probably mediate the attachment of the 5S RNA into the large ribosomal subunit, where it forms part of the central protuberance. In the 70S ribosome it contacts protein S13 of the 30S subunit (bridge B1b), connecting the 2 subunits; this bridge is implicated in subunit movement. Contacts the P site tRNA; the 5S rRNA and some of its associated proteins might help stabilize positioning of ribosome-bound tRNAs. The protein is Large ribosomal subunit protein uL5 of Wigglesworthia glossinidia brevipalpis.